The sequence spans 170 residues: N-alpha-acetyltransferase 50 (170 aa).

Residues 6–155 (IELGDVTPHN…DAHVLQKNLK (150 aa)) form the N-acetyltransferase domain. Residue tyrosine 31 participates in substrate binding. Residue tyrosine 73 is part of the active site. Methionine 75 is a binding site for substrate. 77-90 (LGCLAPYRRLGIGT) is a binding site for acetyl-CoA. 79-90 (CLAPYRRLGIGT) serves as a coordination point for CoA. Histidine 112 is a catalytic residue. Residue 117–126 (NESAIDFYRK) coordinates CoA. Residues 138–141 (YYKR) form a substrate region.

Belongs to the acetyltransferase family. GNAT subfamily.

The protein localises to the cytoplasm. Its subcellular location is the nucleus. It carries out the reaction N-terminal L-methionyl-L-alanyl-[protein] + acetyl-CoA = N-terminal N(alpha)-acetyl-L-methionyl-L-alanyl-[protein] + CoA + H(+). The catalysed reaction is N-terminal L-methionyl-L-seryl-[protein] + acetyl-CoA = N-terminal N(alpha)-acetyl-L-methionyl-L-seryl-[protein] + CoA + H(+). The enzyme catalyses N-terminal L-methionyl-L-valyl-[protein] + acetyl-CoA = N-terminal N(alpha)-acetyl-L-methionyl-L-valyl-[protein] + CoA + H(+). It catalyses the reaction N-terminal L-methionyl-L-threonyl-[protein] + acetyl-CoA = N-terminal N(alpha)-acetyl-L-methionyl-L-threonyl-[protein] + CoA + H(+). It carries out the reaction N-terminal L-methionyl-L-lysyl-[protein] + acetyl-CoA = N-terminal N(alpha)-acetyl-L-methionyl-L-lysyl-[protein] + CoA + H(+). The catalysed reaction is N-terminal L-methionyl-L-leucyl-[protein] + acetyl-CoA = N-terminal N(alpha)-acetyl-L-methionyl-L-leucyl-[protein] + CoA + H(+). The enzyme catalyses N-terminal L-methionyl-L-phenylalanyl-[protein] + acetyl-CoA = N-terminal N(alpha)-acetyl-L-methionyl-L-phenylalanyl-[protein] + CoA + H(+). It catalyses the reaction N-terminal L-methionyl-L-tyrosyl-[protein] + acetyl-CoA = N-terminal N(alpha)-acetyl-L-methionyl-L-tyrosyl-[protein] + CoA + H(+). N-alpha-acetyltransferase that acetylates the N-terminus of proteins that retain their initiating methionine. Has a broad substrate specificity: able to acetylate the initiator methionine of most peptides, except for those with a proline in second position. Also displays N-epsilon-acetyltransferase activity by mediating acetylation of the side chain of specific lysines on proteins. The relevance of N-epsilon-acetyltransferase activity is however unclear. Required for sister chromatid cohesion during mitosis by promoting binding of CDCA5/sororin to cohesin. The protein is N-alpha-acetyltransferase 50 (naa50) of Xenopus laevis (African clawed frog).